Here is a 301-residue protein sequence, read N- to C-terminus: Probable 5-dehydro-4-deoxyglucarate dehydratase (301 aa).

It belongs to the DapA family.

It carries out the reaction 5-dehydro-4-deoxy-D-glucarate + H(+) = 2,5-dioxopentanoate + CO2 + H2O. The protein operates within carbohydrate acid metabolism; D-glucarate degradation; 2,5-dioxopentanoate from D-glucarate: step 2/2. This is Probable 5-dehydro-4-deoxyglucarate dehydratase from Cereibacter sphaeroides (strain ATCC 17023 / DSM 158 / JCM 6121 / CCUG 31486 / LMG 2827 / NBRC 12203 / NCIMB 8253 / ATH 2.4.1.) (Rhodobacter sphaeroides).